The sequence spans 235 residues: MTKKNWNINLKEMVKVGVHFGHETRKWNPKMAPYIFKERKDNHILNLTYTARFLSEACDFVFDGAKRGKQFMIVGTKHQTADAAKLAALAARCHYVNKKWLAGMLTNWFTTEARLEKFKNLTKKKNTGGFDGFTKKEAAILKRELNKLQEDLGGIRYMTKLPDIVIILDQKGEYTAIRECRTLGIPTICLVDTDCDPDLVDIPIPANDDGRGPIRLILNKLILAIRAGRELYYKK.

This sequence belongs to the universal ribosomal protein uS2 family.

The protein resides in the plastid. Its subcellular location is the chloroplast. The sequence is that of Small ribosomal subunit protein uS2c (rps2) from Cryptomeria japonica (Japanese cedar).